Here is a 128-residue protein sequence, read N- to C-terminus: NADPH-dependent 7-cyano-7-deazaguanine reductase (128 aa).

The active-site Thioimide intermediate is the Cys-34. Asp-41 (proton donor) is an active-site residue. Residues 56 to 58 and 75 to 76 each bind substrate; these read IEL and HE.

This sequence belongs to the GTP cyclohydrolase I family. QueF type 1 subfamily.

It localises to the cytoplasm. It catalyses the reaction 7-aminomethyl-7-carbaguanine + 2 NADP(+) = 7-cyano-7-deazaguanine + 2 NADPH + 3 H(+). The protein operates within tRNA modification; tRNA-queuosine biosynthesis. Its function is as follows. Catalyzes the NADPH-dependent reduction of 7-cyano-7-deazaguanine (preQ0) to 7-aminomethyl-7-deazaguanine (preQ1). The chain is NADPH-dependent 7-cyano-7-deazaguanine reductase from Ruthia magnifica subsp. Calyptogena magnifica.